The chain runs to 220 residues: Adenylate kinase (220 aa).

10-15 lines the ATP pocket; sequence GAGKGT. An NMP region spans residues 30-59; it reads STGDMLRAAVKAGTPLGVEAKTYMDEGKLV. Residues threonine 31, arginine 36, 57 to 59, 85 to 88, and glutamine 92 contribute to the AMP site; these read KLV and GFPR. The LID stretch occupies residues 122–159; the sequence is GRRTHPASGRTYHVKFNPPKVEGKDDVTGEPLVQRDDD. ATP contacts are provided by residues arginine 123 and 132–133; that span reads TY. AMP-binding residues include arginine 156 and arginine 167. Glycine 206 contributes to the ATP binding site.

This sequence belongs to the adenylate kinase family. In terms of assembly, monomer.

The protein resides in the cytoplasm. The enzyme catalyses AMP + ATP = 2 ADP. It participates in purine metabolism; AMP biosynthesis via salvage pathway; AMP from ADP: step 1/1. Catalyzes the reversible transfer of the terminal phosphate group between ATP and AMP. Plays an important role in cellular energy homeostasis and in adenine nucleotide metabolism. The sequence is that of Adenylate kinase from Burkholderia mallei (strain NCTC 10247).